A 228-amino-acid chain; its full sequence is L-ribulose-5-phosphate 4-epimerase UlaF (228 aa).

Residues 26 to 27, 43 to 44, and 72 to 73 each bind substrate; these read GN, SG, and SS. Aspartate 74, histidine 93, and histidine 95 together coordinate Zn(2+). Aspartate 118 serves as the catalytic Proton donor/acceptor. Position 167 (histidine 167) interacts with Zn(2+). Catalysis depends on tyrosine 225, which acts as the Proton donor/acceptor.

Belongs to the aldolase class II family. AraD/FucA subfamily. Zn(2+) serves as cofactor.

The enzyme catalyses L-ribulose 5-phosphate = D-xylulose 5-phosphate. It participates in cofactor degradation; L-ascorbate degradation; D-xylulose 5-phosphate from L-ascorbate: step 4/4. Functionally, catalyzes the isomerization of L-ribulose 5-phosphate to D-xylulose 5-phosphate. Is involved in the anaerobic L-ascorbate utilization. The protein is L-ribulose-5-phosphate 4-epimerase UlaF of Escherichia coli (strain K12 / MC4100 / BW2952).